Reading from the N-terminus, the 473-residue chain is Lactate utilization protein B (473 aa).

4Fe-4S ferredoxin-type domains follow at residues 303 to 333 (GTAFQPVLQCIRCAACINVCPVYRHVGGHSY) and 352 to 381 (YDDYQELPFASSLCAACTDACPVKIPLHEL). [4Fe-4S] cluster is bound by residues C312, C315, C318, C322, C365, C368, and C372.

The protein belongs to the LutB/YkgF family.

Is involved in L-lactate degradation and allows cells to grow with lactate as the sole carbon source. Has probably a role as an electron transporter during oxidation of L-lactate. This is Lactate utilization protein B from Bacillus pumilus (strain SAFR-032).